Here is a 300-residue protein sequence, read N- to C-terminus: Shikimate kinase, chloroplastic (300 aa).

The N-terminal 65 residues, Met-1 to Ser-65, are a transit peptide targeting the chloroplast. Residue Gly-111–Thr-118 coordinates ATP. Position 118 (Thr-118) interacts with Mg(2+). Positions 136, 161, and 183 each coordinate substrate. ATP is bound at residue Arg-222.

The protein belongs to the shikimate kinase family. Requires Mg(2+) as cofactor.

Its subcellular location is the plastid. It is found in the chloroplast. The enzyme catalyses shikimate + ATP = 3-phosphoshikimate + ADP + H(+). It participates in metabolic intermediate biosynthesis; chorismate biosynthesis; chorismate from D-erythrose 4-phosphate and phosphoenolpyruvate: step 5/7. In terms of biological role, catalyzes the specific phosphorylation of the 3-hydroxyl group of shikimic acid using ATP as a cosubstrate. This chain is Shikimate kinase, chloroplastic (SK), found in Solanum lycopersicum (Tomato).